The following is a 488-amino-acid chain: Intron-encoded DNA endonuclease I-AniI (488 aa).

The cobA exon 1 encoded stretch occupies residues M1–L169. The cobA intron encoded stretch occupies residues Y170–Y488.

In the C-terminal section; belongs to the LAGLIDADG endonuclease family. Homodimer. The cofactor is Mg(2+). The mature protein may arise from proteolytic cleavage of an in-frame translation of cobA exon 1 plus intron, containing the I-AniI open reading frame. Cleavage may take place close to Met-213 resulting in an active endonuclease/maturase of about 30 kDa.

It is found in the mitochondrion. In terms of biological role, mitochondrial DNA endonuclease and mRNA maturase involved in intron homing and required for splicing of the cytochrome b (cobA) gene intron, containing its own coding sequence. The protein stimulates the intrinsic ribozyme activity of the intron through binding to and stabilizing specific secondary and tertiary structure elements in the RNA. As an endonuclease it introduces a specific double-strand break at the junction of the two exons the cobA gene and thus mediates the insertion of an intron, containing its own coding sequence (group I intron), into an intronless gene. Recognizes with limited specificity and cleaves the sequence 5'-GAGGAGGTTTCTCTGTA-3'. The proteins RNA and DNA recognition and binding surfaces are independent. This chain is Intron-encoded DNA endonuclease I-AniI (I-AniI), found in Emericella nidulans (Aspergillus nidulans).